A 254-amino-acid polypeptide reads, in one-letter code: Alcohol dehydrogenase (254 aa).

10–33 is a binding site for NAD(+); the sequence is FVAGLGGIGLDTSRELVKRDLKNL. A substrate-binding site is contributed by serine 138. Tyrosine 151 (proton acceptor) is an active-site residue.

Belongs to the short-chain dehydrogenases/reductases (SDR) family. As to quaternary structure, homodimer.

It catalyses the reaction a primary alcohol + NAD(+) = an aldehyde + NADH + H(+). It carries out the reaction a secondary alcohol + NAD(+) = a ketone + NADH + H(+). The sequence is that of Alcohol dehydrogenase (Adh) from Drosophila madeirensis (Fruit fly).